The following is a 1040-amino-acid chain: Multidrug resistance protein MdtB (1040 aa).

Helical transmembrane passes span 16–36, 342–362, 373–393, 396–416, 440–460, 472–492, 537–557, 865–885, 888–908, 911–931, 968–988, and 1002–1022; these read FILR…AGLV, DVQF…YLFL, IAVP…GFSV, LTLM…IVVI, IGFT…PLLF, FAVT…TLTP, WITL…YIVI, STIW…GVLY, FIHP…ALLA, ISGS…IGIV, ILMT…STGV, and GGLV…YLLF.

It belongs to the resistance-nodulation-cell division (RND) (TC 2.A.6) family. MdtB subfamily. As to quaternary structure, part of a tripartite efflux system composed of MdtA, MdtB and MdtC. MdtB forms a heteromultimer with MdtC.

The protein resides in the cell inner membrane. The polypeptide is Multidrug resistance protein MdtB (Musicola paradisiaca (strain Ech703) (Dickeya paradisiaca)).